The chain runs to 421 residues: Acetate kinase (421 aa).

Asparagine 7 is a Mg(2+) binding site. An ATP-binding site is contributed by lysine 14. Arginine 91 contributes to the substrate binding site. The active-site Proton donor/acceptor is aspartate 148. Residues 208 to 212 (HIGNG) and 283 to 285 (DRR) contribute to the ATP site. Glutamate 387 lines the Mg(2+) pocket.

It belongs to the acetokinase family. In terms of assembly, homodimer. Mg(2+) is required as a cofactor. Mn(2+) serves as cofactor.

It localises to the cytoplasm. It carries out the reaction acetate + ATP = acetyl phosphate + ADP. The protein operates within metabolic intermediate biosynthesis; acetyl-CoA biosynthesis; acetyl-CoA from acetate: step 1/2. Catalyzes the formation of acetyl phosphate from acetate and ATP. Can also catalyze the reverse reaction. The polypeptide is Acetate kinase (Geobacter sulfurreducens (strain ATCC 51573 / DSM 12127 / PCA)).